A 292-amino-acid chain; its full sequence is Peroxidase 2 (292 aa).

Disulfide bonds link C7-C86, C40-C45, C92-C288, and C171-C199. The active-site Proton acceptor is H38. Ca(2+) is bound by residues D39, V42, G44, D46, and S48. Residue N68 is glycosylated (N-linked (GlcNAc...) asparagine). P134 provides a ligand contact to substrate. The N-linked (GlcNAc...) asparagine glycan is linked to N139. H164 is a binding site for heme b. Ca(2+) is bound at residue T165. A glycan (N-linked (GlcNAc...) asparagine) is linked at N179. D210, T213, and D218 together coordinate Ca(2+).

It belongs to the peroxidase family. Classical plant (class III) peroxidase subfamily. It depends on Ca(2+) as a cofactor. Requires heme b as cofactor.

The catalysed reaction is 2 a phenolic donor + H2O2 = 2 a phenolic radical donor + 2 H2O. In terms of biological role, removal of H(2)O(2), oxidation of toxic reductants, biosynthesis and degradation of lignin, suberization, auxin catabolism, response to environmental stresses such as wounding, pathogen attack and oxidative stress. These functions might be dependent on each isozyme/isoform in each plant tissue. This is Peroxidase 2 from Cucumis sativus (Cucumber).